The chain runs to 840 residues: Leucine--tRNA ligase (840 aa).

A 'HIGH' region motif is present at residues Pro44–His55. A 'KMSKS' region motif is present at residues Lys617 to Ser621. Residue Lys620 participates in ATP binding.

This sequence belongs to the class-I aminoacyl-tRNA synthetase family.

Its subcellular location is the cytoplasm. The enzyme catalyses tRNA(Leu) + L-leucine + ATP = L-leucyl-tRNA(Leu) + AMP + diphosphate. The chain is Leucine--tRNA ligase from Borreliella burgdorferi (strain ZS7) (Borrelia burgdorferi).